The following is a 229-amino-acid chain: Large ribosomal subunit protein uL1 (229 aa).

This sequence belongs to the universal ribosomal protein uL1 family. Part of the 50S ribosomal subunit.

Functionally, binds directly to 23S rRNA. The L1 stalk is quite mobile in the ribosome, and is involved in E site tRNA release. Its function is as follows. Protein L1 is also a translational repressor protein, it controls the translation of the L11 operon by binding to its mRNA. The chain is Large ribosomal subunit protein uL1 from Streptococcus uberis (strain ATCC BAA-854 / 0140J).